A 315-amino-acid polypeptide reads, in one-letter code: Homoserine kinase (315 aa).

Residue 97–107 (PPARGLGSSAT) participates in ATP binding.

This sequence belongs to the GHMP kinase family. Homoserine kinase subfamily.

Its subcellular location is the cytoplasm. It catalyses the reaction L-homoserine + ATP = O-phospho-L-homoserine + ADP + H(+). Its pathway is amino-acid biosynthesis; L-threonine biosynthesis; L-threonine from L-aspartate: step 4/5. Catalyzes the ATP-dependent phosphorylation of L-homoserine to L-homoserine phosphate. In Prochlorococcus marinus (strain MIT 9215), this protein is Homoserine kinase.